Reading from the N-terminus, the 118-residue chain is Large ribosomal subunit protein uL18 (118 aa).

The disordered stretch occupies residues 1 to 24 (MISKPDKNKIRQKRHRRVRGKLSG). Residues 10–20 (IRQKRHRRVRG) are compositionally biased toward basic residues.

It belongs to the universal ribosomal protein uL18 family. Part of the 50S ribosomal subunit; part of the 5S rRNA/L5/L18/L25 subcomplex. Contacts the 5S and 23S rRNAs.

This is one of the proteins that bind and probably mediate the attachment of the 5S RNA into the large ribosomal subunit, where it forms part of the central protuberance. This chain is Large ribosomal subunit protein uL18, found in Streptococcus agalactiae serotype III (strain NEM316).